The chain runs to 730 residues: Polyphosphate kinase (730 aa).

The segment covering 1–21 (MMRHDRNVTEIDAETRPDENL) has biased composition (basic and acidic residues). The disordered stretch occupies residues 1-39 (MMRHDRNVTEIDAETRPDENLWHSGDSAVGAPPAATPAA). Asparagine 86 is a binding site for ATP. Mg(2+)-binding residues include arginine 423 and arginine 453. Histidine 483 (phosphohistidine intermediate) is an active-site residue. ATP-binding residues include tyrosine 516, arginine 612, and histidine 640.

The protein belongs to the polyphosphate kinase 1 (PPK1) family. It depends on Mg(2+) as a cofactor. In terms of processing, an intermediate of this reaction is the autophosphorylated ppk in which a phosphate is covalently linked to a histidine residue through a N-P bond.

It catalyses the reaction [phosphate](n) + ATP = [phosphate](n+1) + ADP. In terms of biological role, catalyzes the reversible transfer of the terminal phosphate of ATP to form a long-chain polyphosphate (polyP). This chain is Polyphosphate kinase, found in Mycobacterium avium (strain 104).